A 120-amino-acid chain; its full sequence is MLKEFKEFALKGNVLDLAIAVVMGAAFNKIISSLVENIIMPLIGKIFGSVDFAKEWSFWGIKYGLFIQSVIDFIIIAFALFIFVKIANTLMKKEEAEEEAVVEENVVLLTEIRDLLREKK.

The next 2 helical transmembrane spans lie at Glu7–Phe27 and Gly64–Val84.

It belongs to the MscL family. As to quaternary structure, homopentamer.

The protein localises to the cell membrane. Its function is as follows. Channel that opens in response to stretch forces in the membrane lipid bilayer. May participate in the regulation of osmotic pressure changes within the cell. In Staphylococcus aureus (strain Mu3 / ATCC 700698), this protein is Large-conductance mechanosensitive channel.